Consider the following 1178-residue polypeptide: DNA-directed RNA polymerase subunit beta' (1178 aa).

Residues C60, C62, C75, and C78 each coordinate Zn(2+). Positions 450, 452, and 454 each coordinate Mg(2+). Residues C795, C869, C876, and C879 each coordinate Zn(2+).

Belongs to the RNA polymerase beta' chain family. As to quaternary structure, the RNAP catalytic core consists of 2 alpha, 1 beta, 1 beta' and 1 omega subunit. When a sigma factor is associated with the core the holoenzyme is formed, which can initiate transcription. Mg(2+) is required as a cofactor. Requires Zn(2+) as cofactor.

It carries out the reaction RNA(n) + a ribonucleoside 5'-triphosphate = RNA(n+1) + diphosphate. Its function is as follows. DNA-dependent RNA polymerase catalyzes the transcription of DNA into RNA using the four ribonucleoside triphosphates as substrates. This Clostridium botulinum (strain Loch Maree / Type A3) protein is DNA-directed RNA polymerase subunit beta'.